The following is a 150-amino-acid chain: UPF0098 protein TC_0109 (150 aa).

This sequence belongs to the UPF0098 family.

The chain is UPF0098 protein TC_0109 from Chlamydia muridarum (strain MoPn / Nigg).